The primary structure comprises 408 residues: Endo-1,4-beta-xylanase A (408 aa).

The first 19 residues, 1–19, serve as a signal peptide directing secretion; it reads MKLSASFAALALLLPFVQA. Positions 20–55 constitute a CBM1 domain; that stretch reads QSPVWGQCGGIGWTGPTTCTAGNVCQEYSAYYSQCI. A disordered region spans residues 64–89; that stretch reads TSVSTAPNPPPTSHTSTSSAPSGAST. Positions 76–89 are enriched in low complexity; the sequence is SHTSTSSAPSGAST. Residues 88–405 form the GH10 domain; sequence STSTAKLNTL…KPAYDGIAIG (318 aa). The active-site Proton donor is Glu222. Glu327 serves as the catalytic Nucleophile. Cys355 and Cys361 are oxidised to a cystine.

Belongs to the glycosyl hydrolase 10 (cellulase F) family.

The protein localises to the secreted. The catalysed reaction is Endohydrolysis of (1-&gt;4)-beta-D-xylosidic linkages in xylans.. The protein operates within glycan degradation; xylan degradation. Endo-1,4-beta-xylanase involved in the hydrolysis of xylan, a major structural heterogeneous polysaccharide found in plant biomass representing the second most abundant polysaccharide in the biosphere, after cellulose. In Phanerodontia chrysosporium (White-rot fungus), this protein is Endo-1,4-beta-xylanase A (xynA).